The primary structure comprises 377 residues: N-acetyldiaminopimelate deacetylase (377 aa).

D70 is a catalytic residue. Catalysis depends on E129, which acts as the Proton acceptor.

This sequence belongs to the peptidase M20A family. N-acetyldiaminopimelate deacetylase subfamily.

The catalysed reaction is N-acetyl-(2S,6S)-2,6-diaminopimelate + H2O = (2S,6S)-2,6-diaminopimelate + acetate. It participates in amino-acid biosynthesis; L-lysine biosynthesis via DAP pathway; LL-2,6-diaminopimelate from (S)-tetrahydrodipicolinate (acetylase route): step 3/3. Its function is as follows. Catalyzes the conversion of N-acetyl-diaminopimelate to diaminopimelate and acetate. The protein is N-acetyldiaminopimelate deacetylase of Geobacillus thermodenitrificans (strain NG80-2).